The primary structure comprises 283 residues: Galactooligosaccharides transport system permease protein GanQ (283 aa).

Transmembrane regions (helical) follow at residues Leu13–Trp33, Ile82–Ser102, Leu115–Ala135, Ile137–Pro157, Ile188–Gly208, and Thr248–Leu268. Positions Tyr76–Leu268 constitute an ABC transmembrane type-1 domain.

Belongs to the binding-protein-dependent transport system permease family. The complex is composed of two ATP-binding proteins (MsmX), two transmembrane proteins (GanP and GanQ) and a solute-binding protein (GanS).

It is found in the cell membrane. In terms of biological role, involved in galactan degradation. Part of the ABC transporter complex GanPQS involved in the uptake of galactooligosaccharides. Responsible for the translocation of the substrate across the membrane. This chain is Galactooligosaccharides transport system permease protein GanQ (ganQ), found in Bacillus subtilis (strain 168).